A 125-amino-acid polypeptide reads, in one-letter code: MPLLRSKKNTGRDAEKRAAKWLTGQGLSIVERNFHCRQGEIDLILLDQETLVFTEVRWRKHQSYGGALASVDQHKQRRLINAAQHFLARHPEHHHRPCRFDVLGMEPDSQQAVLYQWIQNAFYSE.

It belongs to the UPF0102 family.

This is UPF0102 protein ABO_0585 from Alcanivorax borkumensis (strain ATCC 700651 / DSM 11573 / NCIMB 13689 / SK2).